We begin with the raw amino-acid sequence, 395 residues long: Phosphoglycerate kinase (395 aa).

Substrate-binding positions include 20–22, Arg36, 59–62, Arg120, and Arg157; these read DFN and HLGR. ATP is bound by residues Lys208, Gly296, Glu327, and 353 to 356; that span reads GGDT.

The protein belongs to the phosphoglycerate kinase family. In terms of assembly, monomer.

It localises to the cytoplasm. It catalyses the reaction (2R)-3-phosphoglycerate + ATP = (2R)-3-phospho-glyceroyl phosphate + ADP. It functions in the pathway carbohydrate degradation; glycolysis; pyruvate from D-glyceraldehyde 3-phosphate: step 2/5. In Tropheryma whipplei (strain TW08/27) (Whipple's bacillus), this protein is Phosphoglycerate kinase.